The primary structure comprises 230 residues: Thiamine-triphosphatase (230 aa).

The residue at position 2 (A2) is an N-acetylalanine. In terms of domain architecture, CYTH spans 5-201 (LIEVERKFLP…AKLIVYLQRF (197 aa)). 2 residues coordinate Mg(2+): E7 and E9. The substrate site is built by K11, R55, R57, K65, and R125. 3 residues coordinate Mg(2+): D145, E157, and E159. E157 is a substrate binding site. A substrate-binding site is contributed by K193.

It belongs to the ThTPase family. In terms of assembly, monomer. Mg(2+) serves as cofactor.

The protein localises to the cytoplasm. It catalyses the reaction thiamine triphosphate + H2O = thiamine diphosphate + phosphate + H(+). In terms of biological role, hydrolase highly specific for thiamine triphosphate (ThTP). In Macaca fascicularis (Crab-eating macaque), this protein is Thiamine-triphosphatase (THTPA).